A 438-amino-acid polypeptide reads, in one-letter code: Mannose-1-phosphate guanylyltransferase regulatory subunit alpha (438 aa).

The interval 2–260 (LKAVILIGGP…PNWWSQLKTA (259 aa)) is substrate-binding domain. GDP-alpha-D-mannose is bound by residues E87 and Q256. The hexapeptide repeat domain stretch occupies residues 282–438 (LANVGIKRGE…SRSFKNEIIL (157 aa)). Residues 373–402 (TPSDPDPNKPFAKMENPPLFNNEGKLNPSI) are C-loop.

Belongs to the transferase hexapeptide repeat family. As to quaternary structure, component of the GMPPA-GMPPB mannose-1-phosphate guanylyltransferase complex composed of 4 GMPPA subunits and 8 GMPPB subunits; the complex is organized into three layers, a central layer made up of 2 GMPPA dimers sandwiched between two layers each made up of 2 GMPPB dimers.

Its function is as follows. Regulatory subunit of the GMPPA-GMPPB mannose-1-phosphate guanylyltransferase complex; reduces the catalytic activity of GMPPB when part of the complex. Mediates allosteric feedback inhibition of GMPPB catalytic activity upon binding GDP-alpha-D-mannose. Together with GMPPB regulates GDP-alpha-D-mannose levels. The protein is Mannose-1-phosphate guanylyltransferase regulatory subunit alpha of Drosophila melanogaster (Fruit fly).